The primary structure comprises 609 residues: Chloride channel CLIC-like protein 1 (609 aa).

The signal sequence occupies residues 1-25; it reads MKLSSSSSFGLCILVVFFCFVVIES. 3 helical membrane passes run 212 to 235, 241 to 260, and 358 to 380; these read VSLIVLIIVAIICTQLWSVVSWFV, FAVSFFISLIWNWFHLYMLA, and VTLQIPVLIIIILAILIFVYGSA. The interval 398–553 is disordered; the sequence is EQPPPAVGQR…PSSIDVKTVG (156 aa). Basic and acidic residues-rich tracts occupy residues 454 to 474 and 507 to 537; these read ENREEDRSMDIRQEFSTKRTP and EEVKVEEKEKKESFSVDNKEQKETKSPDRSE. The segment covering 538–547 has biased composition (low complexity); the sequence is PITSEPPSSI.

It belongs to the chloride channel MCLC family. In terms of tissue distribution, expressed in the hindbrain, swim bladder and the eye at 1 day post fertilization (dpf) with increased expression at 3 dpf. At 3 dpf, most prominent expression in the retina, with strong expression in the ganglion cell layer, outer nuclear layer and the retinal pigmented epithelium.

The protein resides in the endoplasmic reticulum membrane. It is found in the golgi apparatus membrane. The protein localises to the nucleus membrane. Functionally, seems to act as a chloride ion channel. Plays a role in retina development. The sequence is that of Chloride channel CLIC-like protein 1 from Danio rerio (Zebrafish).